A 510-amino-acid chain; its full sequence is Probable cytosol aminopeptidase (510 aa).

The Mn(2+) site is built by Lys282 and Asp287. The active site involves Lys294. Mn(2+) contacts are provided by Asp305, Asp364, and Glu366. Arg368 is a catalytic residue.

This sequence belongs to the peptidase M17 family. Requires Mn(2+) as cofactor.

It localises to the cytoplasm. The catalysed reaction is Release of an N-terminal amino acid, Xaa-|-Yaa-, in which Xaa is preferably Leu, but may be other amino acids including Pro although not Arg or Lys, and Yaa may be Pro. Amino acid amides and methyl esters are also readily hydrolyzed, but rates on arylamides are exceedingly low.. The enzyme catalyses Release of an N-terminal amino acid, preferentially leucine, but not glutamic or aspartic acids.. Presumably involved in the processing and regular turnover of intracellular proteins. Catalyzes the removal of unsubstituted N-terminal amino acids from various peptides. The protein is Probable cytosol aminopeptidase of Cupriavidus pinatubonensis (strain JMP 134 / LMG 1197) (Cupriavidus necator (strain JMP 134)).